A 205-amino-acid chain; its full sequence is Small ribosomal subunit protein uS5 (205 aa).

The interval 1–25 is disordered; sequence MSGAQRGQRGGERRGGRDDRRGQGA. Residues 9–24 show a composition bias toward basic and acidic residues; that stretch reads RGGERRGGRDDRRGQG. Residues 30–93 form the S5 DRBM domain; sequence YIERVVAINR…EEAKKHFFRV (64 aa).

This sequence belongs to the universal ribosomal protein uS5 family. In terms of assembly, part of the 30S ribosomal subunit. Contacts proteins S4 and S8.

In terms of biological role, with S4 and S12 plays an important role in translational accuracy. Functionally, located at the back of the 30S subunit body where it stabilizes the conformation of the head with respect to the body. The chain is Small ribosomal subunit protein uS5 from Nocardioides sp. (strain ATCC BAA-499 / JS614).